Consider the following 233-residue polypeptide: Maternal B9.15 protein (233 aa).

A disordered region spans residues 135–165 (KATSDYHSGTSSDEEPTNKEPKTIPKVSNPN).

Belongs to the BTG family.

This Xenopus laevis (African clawed frog) protein is Maternal B9.15 protein.